The sequence spans 328 residues: D-cysteine desulfhydrase (328 aa).

K51 is subject to N6-(pyridoxal phosphate)lysine.

This sequence belongs to the ACC deaminase/D-cysteine desulfhydrase family. As to quaternary structure, homodimer. Pyridoxal 5'-phosphate is required as a cofactor.

It catalyses the reaction D-cysteine + H2O = hydrogen sulfide + pyruvate + NH4(+) + H(+). Its function is as follows. Catalyzes the alpha,beta-elimination reaction of D-cysteine and of several D-cysteine derivatives. It could be a defense mechanism against D-cysteine. The polypeptide is D-cysteine desulfhydrase (Klebsiella pneumoniae subsp. pneumoniae (strain ATCC 700721 / MGH 78578)).